Reading from the N-terminus, the 565-residue chain is Periplasmic trehalase (565 aa).

The signal sequence occupies residues 1-30 (MKSPAPSRPQKMALIPACIFLCFAALSVQA). Residues Arg-152, 159–160 (WD), Asn-196, 205–207 (RSQ), 277–279 (RPE), and Gly-310 contribute to the substrate site. Catalysis depends on proton donor/acceptor residues Asp-312 and Glu-496. Substrate is bound at residue Glu-511. The interval 539–565 (CDNVPATRPLSESTTQPVKPKEAEPTL) is disordered.

This sequence belongs to the glycosyl hydrolase 37 family. As to quaternary structure, monomer.

The protein resides in the periplasm. The catalysed reaction is alpha,alpha-trehalose + H2O = alpha-D-glucose + beta-D-glucose. In terms of biological role, provides the cells with the ability to utilize trehalose at high osmolarity by splitting it into glucose molecules that can subsequently be taken up by the phosphotransferase-mediated uptake system. This is Periplasmic trehalase from Shigella dysenteriae serotype 1 (strain Sd197).